Here is a 71-residue protein sequence, read N- to C-terminus: Small ribosomal subunit protein bS18c (71 aa).

The protein belongs to the bacterial ribosomal protein bS18 family. As to quaternary structure, part of the 30S ribosomal subunit.

The protein localises to the plastid. It localises to the cyanelle. The polypeptide is Small ribosomal subunit protein bS18c (rps18) (Cyanophora paradoxa).